The following is a 501-amino-acid chain: Ribose import ATP-binding protein RbsA (501 aa).

ABC transporter domains follow at residues Leu-5–Lys-241 and Ala-252–Leu-495. Gly-37–Ser-44 provides a ligand contact to ATP.

The protein belongs to the ABC transporter superfamily. Ribose importer (TC 3.A.1.2.1) family. The complex is composed of an ATP-binding protein (RbsA), two transmembrane proteins (RbsC) and a solute-binding protein (RbsB).

It localises to the cell inner membrane. The catalysed reaction is D-ribose(out) + ATP + H2O = D-ribose(in) + ADP + phosphate + H(+). Its function is as follows. Part of the ABC transporter complex RbsABC involved in ribose import. Responsible for energy coupling to the transport system. This Salmonella paratyphi A (strain ATCC 9150 / SARB42) protein is Ribose import ATP-binding protein RbsA.